The sequence spans 283 residues: UPF0276 protein Nmul_A2550 (283 aa).

It belongs to the UPF0276 family.

The protein is UPF0276 protein Nmul_A2550 of Nitrosospira multiformis (strain ATCC 25196 / NCIMB 11849 / C 71).